A 367-amino-acid polypeptide reads, in one-letter code: Heme A synthase (367 aa).

5 helical membrane passes run 25-45, 111-131, 139-159, 174-194, and 210-230; these read ALRL…LVGG, LIAR…WLTG, WPLV…WWMV, LATH…IMRG, and GFAA…ALVA. Position 274 (H274) interacts with heme. The next 3 helical transmembrane spans lie at 276–296, 305–325, and 327–347; these read IGAY…LRAA, AVVL…TLLM, and VPLH…GFAV. H335 contributes to the heme binding site.

This sequence belongs to the COX15/CtaA family. Type 2 subfamily. In terms of assembly, interacts with CtaB. Heme b is required as a cofactor.

It localises to the cell membrane. It carries out the reaction Fe(II)-heme o + 2 A + H2O = Fe(II)-heme a + 2 AH2. It participates in porphyrin-containing compound metabolism; heme A biosynthesis; heme A from heme O: step 1/1. Its function is as follows. Catalyzes the conversion of heme O to heme A by two successive hydroxylations of the methyl group at C8. The first hydroxylation forms heme I, the second hydroxylation results in an unstable dihydroxymethyl group, which spontaneously dehydrates, resulting in the formyl group of heme A. In Rhizobium etli (strain CIAT 652), this protein is Heme A synthase.